The chain runs to 66 residues: Large ribosomal subunit protein uL29 (66 aa).

It belongs to the universal ribosomal protein uL29 family.

In Bartonella tribocorum (strain CIP 105476 / IBS 506), this protein is Large ribosomal subunit protein uL29.